Here is a 186-residue protein sequence, read N- to C-terminus: dCTP deaminase (186 aa).

106–111 (KSTYAR) provides a ligand contact to dCTP. The active-site Proton donor/acceptor is the Glu-132. 3 residues coordinate dCTP: Gln-151, Tyr-166, and Gln-176.

The protein belongs to the dCTP deaminase family. Homotrimer.

It carries out the reaction dCTP + H2O + H(+) = dUTP + NH4(+). The protein operates within pyrimidine metabolism; dUMP biosynthesis; dUMP from dCTP (dUTP route): step 1/2. In terms of biological role, catalyzes the deamination of dCTP to dUTP. The protein is dCTP deaminase of Nautilia profundicola (strain ATCC BAA-1463 / DSM 18972 / AmH).